Consider the following 238-residue polypeptide: Probable xyloglucan-specific endo-beta-1,4-glucanase A (238 aa).

A signal peptide spans Met-1–Ala-18. Residues Asn-106 and Asn-171 are each glycosylated (N-linked (GlcNAc...) asparagine).

This sequence belongs to the glycosyl hydrolase 12 (cellulase H) family.

The protein resides in the secreted. It carries out the reaction xyloglucan + H2O = xyloglucan oligosaccharides.. Catalyzes endohydrolysis of 1,4-beta-D-glucosidic linkages in xyloglucan with retention of the beta-configuration of the glycosyl residues. Specific for xyloglucan and does not hydrolyze other cell wall components. The sequence is that of Probable xyloglucan-specific endo-beta-1,4-glucanase A (xgeA) from Aspergillus fumigatus (strain ATCC MYA-4609 / CBS 101355 / FGSC A1100 / Af293) (Neosartorya fumigata).